The sequence spans 200 residues: Imidazoleglycerol-phosphate dehydratase (200 aa).

It belongs to the imidazoleglycerol-phosphate dehydratase family.

It localises to the cytoplasm. The catalysed reaction is D-erythro-1-(imidazol-4-yl)glycerol 3-phosphate = 3-(imidazol-4-yl)-2-oxopropyl phosphate + H2O. Its pathway is amino-acid biosynthesis; L-histidine biosynthesis; L-histidine from 5-phospho-alpha-D-ribose 1-diphosphate: step 6/9. The protein is Imidazoleglycerol-phosphate dehydratase of Chlorobium phaeobacteroides (strain DSM 266 / SMG 266 / 2430).